A 641-amino-acid polypeptide reads, in one-letter code: 1-deoxy-D-xylulose-5-phosphate synthase (641 aa).

Thiamine diphosphate contacts are provided by residues H79 and G120–S122. D151 contributes to the Mg(2+) binding site. Thiamine diphosphate-binding positions include G152 to S153, N180, Y291, and E375. N180 is a binding site for Mg(2+).

Belongs to the transketolase family. DXPS subfamily. In terms of assembly, homodimer. Mg(2+) serves as cofactor. The cofactor is thiamine diphosphate.

The enzyme catalyses D-glyceraldehyde 3-phosphate + pyruvate + H(+) = 1-deoxy-D-xylulose 5-phosphate + CO2. It participates in metabolic intermediate biosynthesis; 1-deoxy-D-xylulose 5-phosphate biosynthesis; 1-deoxy-D-xylulose 5-phosphate from D-glyceraldehyde 3-phosphate and pyruvate: step 1/1. Catalyzes the acyloin condensation reaction between C atoms 2 and 3 of pyruvate and glyceraldehyde 3-phosphate to yield 1-deoxy-D-xylulose-5-phosphate (DXP). The polypeptide is 1-deoxy-D-xylulose-5-phosphate synthase (Nitratidesulfovibrio vulgaris (strain ATCC 29579 / DSM 644 / CCUG 34227 / NCIMB 8303 / VKM B-1760 / Hildenborough) (Desulfovibrio vulgaris)).